The chain runs to 94 residues: Large ribosomal subunit protein uL23 (94 aa).

It belongs to the universal ribosomal protein uL23 family. Part of the 50S ribosomal subunit. Contacts protein L29, and trigger factor when it is bound to the ribosome.

Functionally, one of the early assembly proteins it binds 23S rRNA. One of the proteins that surrounds the polypeptide exit tunnel on the outside of the ribosome. Forms the main docking site for trigger factor binding to the ribosome. This chain is Large ribosomal subunit protein uL23, found in Pelobacter propionicus (strain DSM 2379 / NBRC 103807 / OttBd1).